A 362-amino-acid polypeptide reads, in one-letter code: Histidinol-phosphate aminotransferase (362 aa).

N6-(pyridoxal phosphate)lysine is present on Lys-218.

Belongs to the class-II pyridoxal-phosphate-dependent aminotransferase family. Histidinol-phosphate aminotransferase subfamily. As to quaternary structure, homodimer. Requires pyridoxal 5'-phosphate as cofactor.

The enzyme catalyses L-histidinol phosphate + 2-oxoglutarate = 3-(imidazol-4-yl)-2-oxopropyl phosphate + L-glutamate. The protein operates within amino-acid biosynthesis; L-histidine biosynthesis; L-histidine from 5-phospho-alpha-D-ribose 1-diphosphate: step 7/9. This Xanthomonas campestris pv. campestris (strain 8004) protein is Histidinol-phosphate aminotransferase.